We begin with the raw amino-acid sequence, 470 residues long: Sulfate adenylyltransferase subunit 1 (470 aa).

Positions 22-238 (KELLRFITCG…ETIKIDYAYT (217 aa)) constitute a tr-type G domain. The tract at residues 31 to 38 (GSVDDGKS) is G1. 31 to 38 (GSVDDGKS) lines the GTP pocket. Residues 89–93 (GITID) form a G2 region. Residues 110 to 113 (DTPG) are G3. Residues 110–114 (DTPGH) and 165–168 (NKMD) contribute to the GTP site. The interval 165–168 (NKMD) is G4. The G5 stretch occupies residues 202–204 (SAL).

This sequence belongs to the TRAFAC class translation factor GTPase superfamily. Classic translation factor GTPase family. CysN/NodQ subfamily. In terms of assembly, heterodimer composed of CysD, the smaller subunit, and CysN.

The catalysed reaction is sulfate + ATP + H(+) = adenosine 5'-phosphosulfate + diphosphate. It participates in sulfur metabolism; hydrogen sulfide biosynthesis; sulfite from sulfate: step 1/3. In terms of biological role, with CysD forms the ATP sulfurylase (ATPS) that catalyzes the adenylation of sulfate producing adenosine 5'-phosphosulfate (APS) and diphosphate, the first enzymatic step in sulfur assimilation pathway. APS synthesis involves the formation of a high-energy phosphoric-sulfuric acid anhydride bond driven by GTP hydrolysis by CysN coupled to ATP hydrolysis by CysD. The sequence is that of Sulfate adenylyltransferase subunit 1 from Francisella tularensis subsp. tularensis (strain WY96-3418).